The primary structure comprises 1034 residues: FACT complex subunit spt-16 (1034 aa).

3 stretches are compositionally biased toward basic and acidic residues: residues 433-448 (EEQENRETERDTDQKK), 463-481 (TRNKTTNEDLRKERQKELG), and 493-503 (SKQDGGTDEKK). The tract at residues 433–511 (EEQENRETER…KKVKKSNVSY (79 aa)) is disordered. Positions 617-642 (LSTAFRQIKEMQKRFRTEEAEEREKD) form a coiled coil. Composition is skewed to acidic residues over residues 926–950 (AESEGEDAGDDSDESDAYDPEEADA) and 959–983 (SDEDESEGEETESDDDEEGSLDSDE). A disordered region spans residues 926–1034 (AESEGEDAGD…KAGPSHKRRK (109 aa)). Over residues 984-1020 (SEGKDWSDLEEEAAKADKRREVEDGGRDRDRDRDRKR) the composition is skewed to basic and acidic residues. Basic residues predominate over residues 1021–1034 (PSSSKAGPSHKRRK).

It belongs to the peptidase M24 family. SPT16 subfamily. As to quaternary structure, component of the FACT complex, a stable heterodimer of spt-16 and hmg-3 or hmg-4.

Its subcellular location is the nucleus. The protein localises to the chromosome. Component of the FACT complex, a general chromatin factor that acts to reorganize nucleosomes. The FACT complex is involved in multiple processes that require DNA as a template such as mRNA elongation, DNA replication and DNA repair. During transcription elongation the FACT complex acts as a histone chaperone that both destabilizes and restores nucleosomal structure. It facilitates the passage of RNA polymerase II and transcription by promoting the dissociation of one histone H2A-H2B dimer from the nucleosome, then subsequently promotes the reestablishment of the nucleosome following the passage of RNA polymerase II. The sequence is that of FACT complex subunit spt-16 (spt-16) from Caenorhabditis briggsae.